A 288-amino-acid chain; its full sequence is Heme oxygenase 1 (288 aa).

The Cytoplasmic segment spans residues 1–265 (MERPQPDSMP…KPPLNTRSQA (265 aa)). Residues lysine 18, histidine 25, tyrosine 134, and arginine 183 each coordinate heme b. Residues 223–260 (HDTKDQSPSRAPGLRQRASNKVQDSAPVETPRGKPPLN) are disordered. Serine 229 carries the phosphoserine modification. Residues 266 to 288 (PLLRWVLTLSFLVATVAVGLYAM) traverse the membrane as a helical; Anchor for type IV membrane protein segment.

This sequence belongs to the heme oxygenase family. As to quaternary structure, (Microbial infection) Interacts with SARS-CoV-2 ORF3A protein; the interaction promotes ORF3A-induced autophagy but is unlikely to be involved in ORF3A-mediated induction of reticulophagy. Homodimer and higher order homooligomer. Oligomerization is crucial for its stability and function in the endoplasmic reticulum. Interacts with FLVCR2; this interaction is potentiated in the presence of heme. A soluble form arises by proteolytic removal of the membrane anchor. Expressed at higher levels in renal cancer tissue than in normal tissue (at protein level).

Its subcellular location is the endoplasmic reticulum membrane. The catalysed reaction is heme b + 3 reduced [NADPH--hemoprotein reductase] + 3 O2 = biliverdin IXalpha + CO + Fe(2+) + 3 oxidized [NADPH--hemoprotein reductase] + 3 H2O + H(+). In terms of biological role, catalyzes the oxidative cleavage of heme at the alpha-methene bridge carbon, released as carbon monoxide (CO), to generate biliverdin IXalpha, while releasing the central heme iron chelate as ferrous iron. Affords protection against programmed cell death and this cytoprotective effect relies on its ability to catabolize free heme and prevent it from sensitizing cells to undergo apoptosis. (Microbial infection) During SARS-COV-2 infection, promotes SARS-CoV-2 ORF3A-mediated autophagy but is unlikely to be required for ORF3A-mediated induction of reticulophagy. Functionally, catalyzes the oxidative cleavage of heme at the alpha-methene bridge carbon, released as carbon monoxide (CO), to generate biliverdin IXalpha, while releasing the central heme iron chelate as ferrous iron. The protein is Heme oxygenase 1 (HMOX1) of Homo sapiens (Human).